Reading from the N-terminus, the 631-residue chain is 1-deoxy-D-xylulose-5-phosphate synthase (631 aa).

Thiamine diphosphate-binding positions include His-74 and 115–117; that span reads GHS. A Mg(2+)-binding site is contributed by Asp-146. Thiamine diphosphate-binding positions include 147–148, Asn-175, Tyr-286, and Glu-368; that span reads GA. Position 175 (Asn-175) interacts with Mg(2+).

The protein belongs to the transketolase family. DXPS subfamily. Homodimer. Mg(2+) serves as cofactor. The cofactor is thiamine diphosphate.

It catalyses the reaction D-glyceraldehyde 3-phosphate + pyruvate + H(+) = 1-deoxy-D-xylulose 5-phosphate + CO2. It functions in the pathway metabolic intermediate biosynthesis; 1-deoxy-D-xylulose 5-phosphate biosynthesis; 1-deoxy-D-xylulose 5-phosphate from D-glyceraldehyde 3-phosphate and pyruvate: step 1/1. Functionally, catalyzes the acyloin condensation reaction between C atoms 2 and 3 of pyruvate and glyceraldehyde 3-phosphate to yield 1-deoxy-D-xylulose-5-phosphate (DXP). This chain is 1-deoxy-D-xylulose-5-phosphate synthase, found in Natranaerobius thermophilus (strain ATCC BAA-1301 / DSM 18059 / JW/NM-WN-LF).